Reading from the N-terminus, the 440-residue chain is 3-phosphoshikimate 1-carboxyvinyltransferase (440 aa).

Lys-25, Ser-26, and Arg-30 together coordinate 3-phosphoshikimate. Lys-25 is a binding site for phosphoenolpyruvate. Positions 96 and 124 each coordinate phosphoenolpyruvate. Residues Ser-168, Gln-169, Asp-310, and Lys-337 each contribute to the 3-phosphoshikimate site. Gln-169 contacts phosphoenolpyruvate. Asp-310 functions as the Proton acceptor in the catalytic mechanism. Arg-341, Arg-382, and Lys-409 together coordinate phosphoenolpyruvate.

It belongs to the EPSP synthase family. In terms of assembly, monomer.

It is found in the cytoplasm. It carries out the reaction 3-phosphoshikimate + phosphoenolpyruvate = 5-O-(1-carboxyvinyl)-3-phosphoshikimate + phosphate. Its pathway is metabolic intermediate biosynthesis; chorismate biosynthesis; chorismate from D-erythrose 4-phosphate and phosphoenolpyruvate: step 6/7. Catalyzes the transfer of the enolpyruvyl moiety of phosphoenolpyruvate (PEP) to the 5-hydroxyl of shikimate-3-phosphate (S3P) to produce enolpyruvyl shikimate-3-phosphate and inorganic phosphate. This is 3-phosphoshikimate 1-carboxyvinyltransferase from Chlamydia trachomatis serovar L2 (strain ATCC VR-902B / DSM 19102 / 434/Bu).